Consider the following 749-residue polypeptide: Protein lin-54 homolog (749 aa).

A Glycyl lysine isopeptide (Lys-Gly) (interchain with G-Cter in SUMO2) cross-link involves residue Lys-139. N6-acetyllysine occurs at positions 244 and 249. Residues Ser-264, Ser-282, Ser-310, and Ser-314 each carry the phosphoserine modification. A Glycyl lysine isopeptide (Lys-Gly) (interchain with G-Cter in SUMO2) cross-link involves residue Lys-357. In terms of domain architecture, CRC spans 521–634 (PRKPCNCTKS…KCIGCKNFEE (114 aa)). Residues 523-536 (KPCNCTKSLCLKLY) form a DNA-binding region. Zn(2+) is bound by residues Cys-525, Cys-527, Cys-532, Cys-537, Cys-539, Cys-546, Cys-549, Cys-551, and Cys-554. Residues 583 to 596 (IGKGKEGESDRRHS) form a linker region. Zn(2+) is bound by residues Cys-599, Cys-601, Cys-606, Cys-611, Cys-613, Cys-620, Cys-624, Cys-626, and Cys-629. The DNA-binding stretch occupies residues 599–612 (CNCKRSGCLKNYCE). Ser-635 carries the post-translational modification Phosphoserine. Residues Lys-639, Lys-659, and Lys-661 each participate in a glycyl lysine isopeptide (Lys-Gly) (interchain with G-Cter in SUMO2) cross-link.

Belongs to the lin-54 family. In terms of assembly, component of the DREAM complex (also named LINC complex) at least composed of E2F4, E2F5, LIN9, LIN37, LIN52, LIN54, MYBL1, MYBL2, RBL1, RBL2, RBBP4, RBL2, TFDP1 and TFDP2. The complex exists in quiescent cells where it represses cell cycle-dependent genes. It dissociates in S phase when LIN9, LIN37, LIN52 and LIN54 form a subcomplex that binds to MYBL2.

It is found in the nucleus. Component of the DREAM complex, a multiprotein complex that can both act as a transcription activator or repressor depending on the context. In G0 phase, the complex binds to more than 800 promoters and is required for repression of E2F target genes. In S phase, the complex selectively binds to the promoters of G2/M genes whose products are required for mitosis and participates in their cell cycle dependent activation. In the complex, acts as a DNA-binding protein that binds the promoter of CDK1 in a sequence-specific manner. Specifically recognizes the consensus motif 5'-TTYRAA-3' in target DNA. The polypeptide is Protein lin-54 homolog (Lin54) (Mus musculus (Mouse)).